We begin with the raw amino-acid sequence, 325 residues long: Glutarate 2-hydroxylase (325 aa).

Residues His-160, Asp-162, and His-292 each contribute to the Fe cation site.

The protein belongs to the glutarate hydroxylase family. In terms of assembly, homotetramer. It depends on Fe(2+) as a cofactor.

It catalyses the reaction glutarate + 2-oxoglutarate + O2 = (S)-2-hydroxyglutarate + succinate + CO2. It functions in the pathway amino-acid degradation. Its function is as follows. Acts as an alpha-ketoglutarate-dependent dioxygenase catalyzing hydroxylation of glutarate (GA) to L-2-hydroxyglutarate (L2HG). Functions in a L-lysine degradation pathway that proceeds via cadaverine, glutarate and L-2-hydroxyglutarate. The protein is Glutarate 2-hydroxylase of Salmonella typhimurium (strain SL1344).